Reading from the N-terminus, the 238-residue chain is Purine nucleoside phosphorylase DeoD-type (238 aa).

A purine D-ribonucleoside is bound at residue His4. Residues Gly20, Arg24, Arg43, and 87 to 90 (RVGS) contribute to the phosphate site. Residues 179 to 181 (EME) and 203 to 204 (SD) contribute to the a purine D-ribonucleoside site. Asp204 acts as the Proton donor in catalysis.

Belongs to the PNP/UDP phosphorylase family. Homohexamer; trimer of homodimers.

It catalyses the reaction a purine D-ribonucleoside + phosphate = a purine nucleobase + alpha-D-ribose 1-phosphate. The enzyme catalyses a purine 2'-deoxy-D-ribonucleoside + phosphate = a purine nucleobase + 2-deoxy-alpha-D-ribose 1-phosphate. Functionally, catalyzes the reversible phosphorolytic breakdown of the N-glycosidic bond in the beta-(deoxy)ribonucleoside molecules, with the formation of the corresponding free purine bases and pentose-1-phosphate. In Haemophilus influenzae (strain 86-028NP), this protein is Purine nucleoside phosphorylase DeoD-type.